The sequence spans 197 residues: Recombination protein RecR (197 aa).

The C4-type zinc finger occupies 56 to 71; it reads CPVCGTLDTRAPCSIC. The 96-residue stretch at 79–174 folds into the Toprim domain; the sequence is TLICVVRDVA…TVSGLAQGVP (96 aa).

This sequence belongs to the RecR family.

Functionally, may play a role in DNA repair. It seems to be involved in an RecBC-independent recombinational process of DNA repair. It may act with RecF and RecO. The sequence is that of Recombination protein RecR from Rhodospirillum rubrum (strain ATCC 11170 / ATH 1.1.1 / DSM 467 / LMG 4362 / NCIMB 8255 / S1).